The sequence spans 204 residues: MIPTSDITGLILAGGRGSRMGGVDKGLQTFRGAPMAMHTLMRLSPQVGHMLINANRNLAAYESFGVPVVADSVPDFAGPLAGILAGLEQCQTRYLLTAPCDSPFVPTDLAAKLSQAMEEANARIAMPVTMEPDAQGQPRRQVQPVFCLIDALLADDLIVYLQGGGRKIETWTARHATVDVLFDDSTAFANINTLEELHQLAERR.

Residues 12 to 14 (LAG), Lys25, Asn53, Asp71, and Asp101 contribute to the GTP site. Asp101 is a binding site for Mg(2+).

The protein belongs to the MobA family. In terms of assembly, monomer. It depends on Mg(2+) as a cofactor.

Its subcellular location is the cytoplasm. The enzyme catalyses Mo-molybdopterin + GTP + H(+) = Mo-molybdopterin guanine dinucleotide + diphosphate. Transfers a GMP moiety from GTP to Mo-molybdopterin (Mo-MPT) cofactor (Moco or molybdenum cofactor) to form Mo-molybdopterin guanine dinucleotide (Mo-MGD) cofactor. This Ralstonia pickettii (strain 12J) protein is Molybdenum cofactor guanylyltransferase.